Consider the following 247-residue polypeptide: ATP synthase subunit a, chloroplastic (247 aa).

The next 5 membrane-spanning stretches (helical) occupy residues 38–58 (QVLI…IIAV), 95–115 (VPFI…GALL), 134–154 (INTT…AGLS), 199–219 (LVVV…VMFL), and 220–240 (GLFT…AYIG).

Belongs to the ATPase A chain family. As to quaternary structure, F-type ATPases have 2 components, CF(1) - the catalytic core - and CF(0) - the membrane proton channel. CF(1) has five subunits: alpha(3), beta(3), gamma(1), delta(1), epsilon(1). CF(0) has four main subunits: a, b, b' and c.

The protein localises to the plastid. It localises to the chloroplast thylakoid membrane. In terms of biological role, key component of the proton channel; it plays a direct role in the translocation of protons across the membrane. The protein is ATP synthase subunit a, chloroplastic of Oryza nivara (Indian wild rice).